Here is a 214-residue protein sequence, read N- to C-terminus: MRSIMEVETLKRLALMGANKEQVSLSSSIFATSLGMSPQTAARRLSALEEDGYITRVVTPEGQKVRITEKGITCLKSEYRDYCSIFEDGGAPVMRGKVVTGLGEGQYYISLDGYRNQFNDKLGFDPYPGTLNVRLTEPFIPAEHEAVVIAGFKGENRTFGGCKCYPVRIKGVRAAIIRPDRTSYPPNLIEIIAPIKLRESLGLRDGDEVEVTLE.

The interval 1–91 (MRSIMEVETL…YCSIFEDGGA (91 aa)) is H-T-H motif-like. Positions 92–214 (PVMRGKVVTG…DGDEVEVTLE (123 aa)) are riboflavin kinase. Position 101–106 (101–106 (GLGEGQ)) interacts with CDP. Threonine 130 and asparagine 132 together coordinate Mg(2+). The FMN site is built by threonine 182 and glutamate 190. 195 to 198 (IKLR) is a CDP binding site.

It belongs to the archaeal riboflavin kinase family. The cofactor is Mg(2+).

It carries out the reaction riboflavin + CTP = CDP + FMN + H(+). Its pathway is cofactor biosynthesis; FMN biosynthesis; FMN from riboflavin (CTP route): step 1/1. In terms of biological role, catalyzes the CTP-dependent phosphorylation of riboflavin (vitamin B2) to form flavin mononucleotide (FMN). This is Riboflavin kinase (ribK) from Methanocella arvoryzae (strain DSM 22066 / NBRC 105507 / MRE50).